The following is a 194-amino-acid chain: Ubiquitin-conjugating enzyme E2 T (194 aa).

The 151-residue stretch at 2 to 152 (QRVSRLKREM…AKKWTAEHAI (151 aa)) folds into the UBC core domain. Residue cysteine 86 is the Glycyl thioester intermediate of the active site. Composition is skewed to basic and acidic residues over residues 158-170 (CVETDGKTPENKN) and 185-194 (NLEHTKKVCL). A disordered region spans residues 158–194 (CVETDGKTPENKNLKTSHKREALSAQENLEHTKKVCL).

The protein belongs to the ubiquitin-conjugating enzyme family.

It is found in the nucleus. The catalysed reaction is S-ubiquitinyl-[E1 ubiquitin-activating enzyme]-L-cysteine + [E2 ubiquitin-conjugating enzyme]-L-cysteine = [E1 ubiquitin-activating enzyme]-L-cysteine + S-ubiquitinyl-[E2 ubiquitin-conjugating enzyme]-L-cysteine.. Its pathway is protein modification; protein ubiquitination. Its function is as follows. Accepts ubiquitin from the E1 complex and catalyzes its covalent attachment to other proteins. Catalyzes monoubiquitination. Involved in DNA repair. This Danio rerio (Zebrafish) protein is Ubiquitin-conjugating enzyme E2 T (ube2t).